The following is a 2144-amino-acid chain: Alpha-protein kinase 2 (2144 aa).

Positions 7-105 (PERRTLCFLS…ICCSASLEVQ (99 aa)) constitute an Ig-like 1 domain. Residues Cys33 and Cys98 are joined by a disulfide bond. 11 disordered regions span residues 425 to 473 (ETAK…LQTM), 500 to 575 (SLAR…GAPG), 727 to 775 (EDNE…NVGS), 845 to 864 (QTQG…DGKS), 881 to 907 (EASE…TLPY), 1011 to 1065 (SCEA…PEGQ), 1316 to 1340 (DPVE…EMEM), 1471 to 1509 (GPGE…ETEV), 1565 to 1587 (CGNH…PKGN), 1629 to 1696 (ECES…GSGH), and 1720 to 1754 (ENSR…PCKA). The span at 500 to 511 (SLARERTDEKYP) shows a compositional bias: basic and acidic residues. Residues 853 to 864 (RSTDKRSQDGKS) are compositionally biased toward basic and acidic residues. Residues 897 to 906 (PPSTFSSTLP) are compositionally biased toward polar residues. A compositionally biased stretch (polar residues) spans 1574 to 1587 (DLTNTPCTSSPKGN). Basic and acidic residues-rich tracts occupy residues 1631–1645 (ESEK…RDPC) and 1732–1754 (PKFE…PCKA). An Ig-like 2 domain is found at 1759–1847 (PVLLKRIQAE…GKVTAEFNLT (89 aa)). The cysteines at positions 1781 and 1831 are disulfide-linked. The Alpha-type protein kinase domain maps to 1874–2106 (KEDVFNDSYF…YCKMLGLKSL (233 aa)). Residues 2109–2144 (NSQKPKKPIVGKGRVPTNATQVKTPESETPPAERKT) form a disordered region.

The protein belongs to the protein kinase superfamily. Alpha-type protein kinase family. ALPK subfamily.

It is found in the basolateral cell membrane. The enzyme catalyses L-seryl-[protein] + ATP = O-phospho-L-seryl-[protein] + ADP + H(+). It carries out the reaction L-threonyl-[protein] + ATP = O-phospho-L-threonyl-[protein] + ADP + H(+). In terms of biological role, protein kinase that recognizes phosphorylation sites in which the surrounding peptides have an alpha-helical conformation. Regulates cardiac development and cardiomyocyte differentiation by negatively regulating Wnt/beta-catenin signaling. This chain is Alpha-protein kinase 2, found in Mus musculus (Mouse).